A 366-amino-acid polypeptide reads, in one-letter code: S-adenosylmethionine synthase 1 (366 aa).

Glutamate 18 is a K(+) binding site. L-methionine contacts are provided by glutamate 31 and glutamine 74. Residues 142–144 (DGN), 210–213 (SGRF), aspartate 221, 227–228 (RK), alanine 244, lysine 248, and lysine 252 contribute to the ATP site. Aspartate 221 contacts L-methionine. Lysine 252 provides a ligand contact to L-methionine.

The protein belongs to the AdoMet synthase family. In terms of assembly, homotetramer. Requires Mn(2+) as cofactor. Mg(2+) is required as a cofactor. It depends on Co(2+) as a cofactor. The cofactor is K(+).

The protein localises to the cytoplasm. The catalysed reaction is L-methionine + ATP + H2O = S-adenosyl-L-methionine + phosphate + diphosphate. It functions in the pathway amino-acid biosynthesis; S-adenosyl-L-methionine biosynthesis; S-adenosyl-L-methionine from L-methionine: step 1/1. Functionally, catalyzes the formation of S-adenosylmethionine from methionine and ATP. The reaction comprises two steps that are both catalyzed by the same enzyme: formation of S-adenosylmethionine (AdoMet) and triphosphate, and subsequent hydrolysis of the triphosphate. This chain is S-adenosylmethionine synthase 1 (SAMS1), found in Pisum sativum (Garden pea).